The primary structure comprises 147 residues: Hemoglobin subunit epsilon (147 aa).

A Globin domain is found at 3-147 (HLTAEEKSSV…VATALAHKYH (145 aa)). S14 and S51 each carry phosphoserine. 2 residues coordinate heme b: H64 and H93.

This sequence belongs to the globin family. In terms of assembly, heterotetramer of two alpha chains and two epsilon chains in early embryonic hemoglobin Gower-2; two zeta chains and two epsilon chains in early embryonic hemoglobin Gower-1. As to expression, red blood cells.

In terms of biological role, the epsilon chain is a beta-type chain of early mammalian embryonic hemoglobin. The chain is Hemoglobin subunit epsilon (HBE1) from Carlito syrichta (Philippine tarsier).